The following is a 453-amino-acid chain: Ribosomal protein uS12 methylthiotransferase RimO (453 aa).

An MTTase N-terminal domain is found at 5–120 (PKVGFVSLGC…VMQAVHSHLP (116 aa)). 6 residues coordinate [4Fe-4S] cluster: cysteine 14, cysteine 50, cysteine 79, cysteine 151, cysteine 155, and cysteine 158. One can recognise a Radical SAM core domain in the interval 137–382 (LTPRHYAYLK…MEVAEEVSAR (246 aa)). The region spanning 385–453 (QRKVGKTLKV…ADGHDLWGEV (69 aa)) is the TRAM domain.

The protein belongs to the methylthiotransferase family. RimO subfamily. The cofactor is [4Fe-4S] cluster.

The protein resides in the cytoplasm. The catalysed reaction is L-aspartate(89)-[ribosomal protein uS12]-hydrogen + (sulfur carrier)-SH + AH2 + 2 S-adenosyl-L-methionine = 3-methylsulfanyl-L-aspartate(89)-[ribosomal protein uS12]-hydrogen + (sulfur carrier)-H + 5'-deoxyadenosine + L-methionine + A + S-adenosyl-L-homocysteine + 2 H(+). Its function is as follows. Catalyzes the methylthiolation of an aspartic acid residue of ribosomal protein uS12. This chain is Ribosomal protein uS12 methylthiotransferase RimO, found in Burkholderia vietnamiensis (strain G4 / LMG 22486) (Burkholderia cepacia (strain R1808)).